We begin with the raw amino-acid sequence, 313 residues long: Putative adhesin P1-like protein MPN_202 (313 aa).

The span at 1-16 (MGSQNQGSTTTTSAGN) shows a compositional bias: low complexity. A disordered region spans residues 1-44 (MGSQNQGSTTTTSAGNPDSLVTDKVDQKGQVQTSGQNLSDTNYT). A compositionally biased stretch (polar residues) spans 29 to 44 (GQVQTSGQNLSDTNYT).

This sequence belongs to the adhesin P1 family.

This is Putative adhesin P1-like protein MPN_202 from Mycoplasma pneumoniae (strain ATCC 29342 / M129 / Subtype 1) (Mycoplasmoides pneumoniae).